Reading from the N-terminus, the 525-residue chain is GMP synthase [glutamine-hydrolyzing] (525 aa).

The Glutamine amidotransferase type-1 domain maps to 9–207 (RILILDFGSQ…VRDICQCEAL (199 aa)). The Nucleophile role is filled by Cys86. Active-site residues include His181 and Glu183. The 193-residue stretch at 208-400 (WTPAKIIDDA…LGLPYDMLYR (193 aa)) folds into the GMPS ATP-PPase domain. Position 235-241 (235-241 (SGGVDSS)) interacts with ATP.

Homodimer.

It catalyses the reaction XMP + L-glutamine + ATP + H2O = GMP + L-glutamate + AMP + diphosphate + 2 H(+). The protein operates within purine metabolism; GMP biosynthesis; GMP from XMP (L-Gln route): step 1/1. Catalyzes the synthesis of GMP from XMP. The protein is GMP synthase [glutamine-hydrolyzing] of Escherichia coli O8 (strain IAI1).